An 83-amino-acid chain; its full sequence is UPF0248 protein TGAM_1209 (83 aa).

It belongs to the UPF0248 family.

The chain is UPF0248 protein TGAM_1209 from Thermococcus gammatolerans (strain DSM 15229 / JCM 11827 / EJ3).